A 1166-amino-acid polypeptide reads, in one-letter code: DNA-directed RNA polymerase I subunit RPA2 (1166 aa).

A C4-type zinc finger spans residues 1081–1130 (CQNCGSILSCYVNRAIMKTQTFIPPSLDESNKDTEDKEIHMNEKVICKVC).

Belongs to the RNA polymerase beta chain family. Component of the RNA polymerase I (Pol I) complex consisting of at least 13 subunits.

The protein resides in the nucleus. Its subcellular location is the nucleolus. It catalyses the reaction RNA(n) + a ribonucleoside 5'-triphosphate = RNA(n+1) + diphosphate. DNA-dependent RNA polymerase catalyzes the transcription of DNA into RNA using the four ribonucleoside triphosphates as substrates. Second largest core component of RNA polymerase I which synthesizes ribosomal RNA precursors. Proposed to contribute to the polymerase catalytic activity and forms the polymerase active center together with the largest subunit. Pol I is composed of mobile elements and RPA2 is part of the core element with the central large cleft and probably a clamp element that moves to open and close the cleft. This chain is DNA-directed RNA polymerase I subunit RPA2 (RPA2), found in Euplotoides octocarinatus (Freshwater ciliate).